A 348-amino-acid polypeptide reads, in one-letter code: MIGSVLQKVVAGQILDIDEAMEAMSAIMTGEATPAQIAALVTALRMRGERETEIAGFVKGLRAHMIPVELQLAQPVIDVVGTGGDGNRTFNISTATAFVVAGAGVPVAKHGNRAMSSRAGSADVLEALGVRIDLNPSAVARCVEEAGIGFMFAQRFHPALRHAAPVRRELGFRTVFNVLGPLANPARVRYQLLGVAMPELVETVARVLALLDVEHALVVHSADGLDEISLGAPTTVYEVRRNGTVEVRRWTLEPESLGLERVPSDALRGGTAEENARIVRAVLEGARGPARDVVLLNAAAALVAADAAQSLAEGLELARHAIDSGAALDRLERLKVLSNALAEAEVPS.

5-phospho-alpha-D-ribose 1-diphosphate is bound by residues G81, 84–85 (GD), T89, 91–94 (NIST), 109–117 (KHGNRAMSS), and S121. An anthranilate-binding site is contributed by G81. S93 contributes to the Mg(2+) binding site. N112 contributes to the anthranilate binding site. R167 is a binding site for anthranilate. Mg(2+) contacts are provided by D226 and E227.

The protein belongs to the anthranilate phosphoribosyltransferase family. In terms of assembly, homodimer. Requires Mg(2+) as cofactor.

The catalysed reaction is N-(5-phospho-beta-D-ribosyl)anthranilate + diphosphate = 5-phospho-alpha-D-ribose 1-diphosphate + anthranilate. Its pathway is amino-acid biosynthesis; L-tryptophan biosynthesis; L-tryptophan from chorismate: step 2/5. Catalyzes the transfer of the phosphoribosyl group of 5-phosphorylribose-1-pyrophosphate (PRPP) to anthranilate to yield N-(5'-phosphoribosyl)-anthranilate (PRA). This Thermomicrobium roseum (strain ATCC 27502 / DSM 5159 / P-2) protein is Anthranilate phosphoribosyltransferase.